The primary structure comprises 342 residues: UDP-3-O-acylglucosamine N-acyltransferase (342 aa).

Residue H234 is the Proton acceptor of the active site.

Belongs to the transferase hexapeptide repeat family. LpxD subfamily. In terms of assembly, homotrimer.

It catalyses the reaction a UDP-3-O-[(3R)-3-hydroxyacyl]-alpha-D-glucosamine + a (3R)-hydroxyacyl-[ACP] = a UDP-2-N,3-O-bis[(3R)-3-hydroxyacyl]-alpha-D-glucosamine + holo-[ACP] + H(+). The protein operates within bacterial outer membrane biogenesis; LPS lipid A biosynthesis. Functionally, catalyzes the N-acylation of UDP-3-O-acylglucosamine using 3-hydroxyacyl-ACP as the acyl donor. Is involved in the biosynthesis of lipid A, a phosphorylated glycolipid that anchors the lipopolysaccharide to the outer membrane of the cell. The polypeptide is UDP-3-O-acylglucosamine N-acyltransferase (Oleidesulfovibrio alaskensis (strain ATCC BAA-1058 / DSM 17464 / G20) (Desulfovibrio alaskensis)).